A 174-amino-acid chain; its full sequence is Type II secretion system protein M (174 aa).

Topologically, residues 1 to 32 (MKVMTQFHERLRAQAETSQLAIRWRGLPARDR) are cytoplasmic. A helical membrane pass occupies residues 33-52 (LALLWLGAFLLLVVLYLALW). Residues 53–174 (RPAERHLQSA…VSARLSLRVE (122 aa)) lie on the Periplasmic side of the membrane.

It belongs to the GSP M family. In terms of assembly, type II secretion system is composed of four main components: the outer membrane complex, the inner membrane complex, the cytoplasmic secretion ATPase and the periplasm-spanning pseudopilus. Forms homodimers. Interacts with XcpY/GspL. Interacts with XcpR/GspE and XcpS/GspF.

Its subcellular location is the cell inner membrane. Its function is as follows. Inner membrane component of the type II secretion system required for the energy-dependent secretion of extracellular factors such as proteases and toxins from the periplasm. Plays a role in the complex assembly and recruits XcpY resulting in a stable complex in the inner membrane. Provides thus a link between the energy-providing XcpR protein in the cytoplasm and the rest of the T2SS machinery. This is Type II secretion system protein M (xcpZ) from Pseudomonas aeruginosa (strain ATCC 15692 / DSM 22644 / CIP 104116 / JCM 14847 / LMG 12228 / 1C / PRS 101 / PAO1).